Here is a 247-residue protein sequence, read N- to C-terminus: MRVRLLEATENPEELICQSARNDYMSDWVGDTPLDTAMASVDGDTTDEKLSNLIAQLLTRGHYGPFEHPSATFAIEGVSRSCMAQLTRHRHASFDVQSMRYVAFDDVDPAAVAEGELVVTPPSATDPDWVGRNQDAGDIDEETMAEREAVFQASVRRAVEDYQELLGLGMPPEDARFVLPIGTEVNVVITLNPRSLMHVADMRAAADAQWEIRELTEQLLDAAAQWCPHTFEYYDAEMKHRKNRLAP.

Residues 1–237 (MRVRLLEATE…PHTFEYYDAE (237 aa)) enclose the ThyX domain. DUMP is bound by residues 85–88 (QLTR), 98–100 (SMR), and Arg-176. 88 to 90 (RHR) is a binding site for FAD. The ThyX motif motif lies at 88–98 (RHRHASFDVQS). FAD contacts are provided by residues 192–194 (NPR) and His-198. Arg-203 is a dUMP binding site. Arg-203 serves as the catalytic Involved in ionization of N3 of dUMP, leading to its activation.

Belongs to the thymidylate synthase ThyX family. As to quaternary structure, homotetramer. Requires FAD as cofactor.

The enzyme catalyses dUMP + (6R)-5,10-methylene-5,6,7,8-tetrahydrofolate + NADPH + H(+) = dTMP + (6S)-5,6,7,8-tetrahydrofolate + NADP(+). It functions in the pathway pyrimidine metabolism; dTTP biosynthesis. Catalyzes the reductive methylation of 2'-deoxyuridine-5'-monophosphate (dUMP) to 2'-deoxythymidine-5'-monophosphate (dTMP) while utilizing 5,10-methylenetetrahydrofolate (mTHF) as the methyl donor, and NADPH and FADH(2) as the reductant. The sequence is that of Flavin-dependent thymidylate synthase from Halobacterium salinarum (strain ATCC 700922 / JCM 11081 / NRC-1) (Halobacterium halobium).